A 497-amino-acid polypeptide reads, in one-letter code: Protein nucleotidyltransferase YdiU (497 aa).

ATP-binding residues include G92, G94, R95, K114, D126, G127, R177, and R184. The active-site Proton acceptor is D261. Residues N262 and D271 each coordinate Mg(2+). D271 lines the ATP pocket.

Belongs to the SELO family. It depends on Mg(2+) as a cofactor. The cofactor is Mn(2+).

It catalyses the reaction L-seryl-[protein] + ATP = 3-O-(5'-adenylyl)-L-seryl-[protein] + diphosphate. The enzyme catalyses L-threonyl-[protein] + ATP = 3-O-(5'-adenylyl)-L-threonyl-[protein] + diphosphate. The catalysed reaction is L-tyrosyl-[protein] + ATP = O-(5'-adenylyl)-L-tyrosyl-[protein] + diphosphate. It carries out the reaction L-histidyl-[protein] + UTP = N(tele)-(5'-uridylyl)-L-histidyl-[protein] + diphosphate. It catalyses the reaction L-seryl-[protein] + UTP = O-(5'-uridylyl)-L-seryl-[protein] + diphosphate. The enzyme catalyses L-tyrosyl-[protein] + UTP = O-(5'-uridylyl)-L-tyrosyl-[protein] + diphosphate. Nucleotidyltransferase involved in the post-translational modification of proteins. It can catalyze the addition of adenosine monophosphate (AMP) or uridine monophosphate (UMP) to a protein, resulting in modifications known as AMPylation and UMPylation. The sequence is that of Protein nucleotidyltransferase YdiU from Bordetella petrii (strain ATCC BAA-461 / DSM 12804 / CCUG 43448).